A 291-amino-acid polypeptide reads, in one-letter code: Acetylglutamate kinase (291 aa).

Residues 64-65, R86, and N190 contribute to the substrate site; that span reads GG.

The protein belongs to the acetylglutamate kinase family. ArgB subfamily.

It localises to the cytoplasm. It catalyses the reaction N-acetyl-L-glutamate + ATP = N-acetyl-L-glutamyl 5-phosphate + ADP. It participates in amino-acid biosynthesis; L-arginine biosynthesis; N(2)-acetyl-L-ornithine from L-glutamate: step 2/4. In terms of biological role, catalyzes the ATP-dependent phosphorylation of N-acetyl-L-glutamate. This chain is Acetylglutamate kinase, found in Leptospira borgpetersenii serovar Hardjo-bovis (strain JB197).